The primary structure comprises 600 residues: MAIRQLSETLINQIAAGEVIERPASAAKELIENALDAGATRIEIATAGGGKALLRVSDNGSGMDAADLELAVRRHCTSKLSETLEDIRTLGFRGEALPSIGSVARLSIASRRRDSAGGHEIAVNAGKVAHLRPAAANPGTIVEVRDLFFATPARLKFLKTEKAEAGAITEIVKRMAIAFPAVRFVLSGSDRTTLEFPATGDDHLARMAQVLGKDFRDNAIALDAVREEISLTGFAGVPTFNRGNSAHQYAFVNGRPVQDKLILSAIRGAYAETIPSGRHPVAVLSITLDPALVDVNVHPAKSDVRFRDPGLVRGLIVGAIREALARDGSRAATTGASDMLRSFRPGFQPQAQRPQTAWSAETSPFRPYQPTTGFSERPQASFDGLSMPTARAEPPFSPQPAAADTTARYPLGAARAQIHANYIVAQTEDGLVIVDQHAAHERLVFEAMRKALHSKRLASQVLLIPEIVDIPEEDCDRLMQHAAELAELGLAIERFGPGAIAVRETPAMLGEVDAHGLIRQLADEIAEWDTASGLSAKLEYVAATMACHGSVRSGRRLRPEEMNALLREMEVTPGSGQCNHGRPTYIELKLSDIERLFGRS.

The disordered stretch occupies residues glutamine 348–serine 375. Residues proline 349 to threonine 362 show a composition bias toward polar residues.

This sequence belongs to the DNA mismatch repair MutL/HexB family.

Its function is as follows. This protein is involved in the repair of mismatches in DNA. It is required for dam-dependent methyl-directed DNA mismatch repair. May act as a 'molecular matchmaker', a protein that promotes the formation of a stable complex between two or more DNA-binding proteins in an ATP-dependent manner without itself being part of a final effector complex. The sequence is that of DNA mismatch repair protein MutL from Rhizobium leguminosarum bv. trifolii (strain WSM2304).